The chain runs to 64 residues: Defensin-like protein 123 (64 aa).

Disulfide bonds link cysteine 19–cysteine 62, cysteine 29–cysteine 49, cysteine 34–cysteine 56, and cysteine 38–cysteine 58.

The protein belongs to the DEFL family.

This chain is Defensin-like protein 123, found in Arabidopsis thaliana (Mouse-ear cress).